We begin with the raw amino-acid sequence, 581 residues long: Adenine deaminase (581 aa).

It belongs to the metallo-dependent hydrolases superfamily. Adenine deaminase family. The cofactor is Mn(2+).

It carries out the reaction adenine + H2O + H(+) = hypoxanthine + NH4(+). In Brucella abortus (strain 2308), this protein is Adenine deaminase.